The primary structure comprises 349 residues: Isopentenyl-diphosphate delta-isomerase (349 aa).

9–10 (RK) lines the substrate pocket. Residues 65–67 (AMT), Ser-95, and Asn-124 each bind FMN. A substrate-binding site is contributed by 95–97 (STH). Gln-154 is a substrate binding site. Residue Glu-155 participates in Mg(2+) binding. Residues Lys-186, Ser-211, Thr-216, 262 to 264 (GLR), and 283 to 284 (SR) each bind FMN.

It belongs to the IPP isomerase type 2 family. Homooctamer. Dimer of tetramers. FMN serves as cofactor. The cofactor is NADPH. Requires Mg(2+) as cofactor.

Its subcellular location is the cytoplasm. It carries out the reaction isopentenyl diphosphate = dimethylallyl diphosphate. Its function is as follows. Involved in the biosynthesis of isoprenoids. Catalyzes the 1,3-allylic rearrangement of the homoallylic substrate isopentenyl (IPP) to its allylic isomer, dimethylallyl diphosphate (DMAPP). The protein is Isopentenyl-diphosphate delta-isomerase of Staphylococcus aureus.